We begin with the raw amino-acid sequence, 210 residues long: Thymidylate kinase (210 aa).

14 to 21 contacts ATP; it reads GLDRSGKS.

The protein belongs to the thymidylate kinase family.

The catalysed reaction is dTMP + ATP = dTDP + ADP. The protein operates within pyrimidine metabolism; dTTP biosynthesis. Catalyzes the conversion of dTMP to dTDP. The chain is Thymidylate kinase (tmp1) from Schizosaccharomyces pombe (strain 972 / ATCC 24843) (Fission yeast).